A 281-amino-acid chain; its full sequence is Leukocyte antigen CD37 (281 aa).

The Cytoplasmic segment spans residues 1–17 (MSAQESCLSLIKYFLFV). Residues 18-38 (FNLFFFVLGGLIFCFGTWILI) traverse the membrane as a helical segment. Residues 39 to 59 (DKTSFVSFVGLSFVPLQTWSK) are Extracellular-facing. A helical transmembrane segment spans residues 60–74 (VLAVSGVLTMALALL). The Cytoplasmic portion of the chain corresponds to 75–85 (GCVGALKELRC). A helical membrane pass occupies residues 86–111 (LLGLYFGMLLLLFATQITLGILISTQ). Over 112-241 (RVRLERRVQE…QSLQKWLHNN (130 aa)) the chain is Extracellular. Asn-170, Asn-183, and Asn-188 each carry an N-linked (GlcNAc...) asparagine glycan. A helical transmembrane segment spans residues 242-266 (IISIVGICLGVGLLELGFMTLSIFL). Residues 267–281 (CRNLDHVYDRLARYR) are Cytoplasmic-facing.

Belongs to the tetraspanin (TM4SF) family. As to quaternary structure, interacts with SCIMP. Interacts with SOCS3. Interacts with DECTIN1/CLEC7A. Post-translationally, tyrosine phosphorylated; leading to activation of downstream signaling pathways.

It is found in the cell membrane. Structural component of specialized membrane microdomains known as tetraspanin-enriched microdomains (TERMs), which act as platforms for receptor clustering and signaling. Participates thereby in diverse biological functions such as cell signal transduction, adhesion, migration and protein trafficking. Upon ligand binding, two signaling pathways are activated, one acting through phosphorylation by LYN leading to cell death or a survival pathway with activation of GSK3B. Plays an essential role for clustering of integrin ITGA4/ITGB1 and promotes its mobility in the plasma membrane of B-cells. In turn, participates in ITGA4/ITGB1 integrin-mediated antiapoptotic signaling through AKT. Also plays a role in the migration of dendritic cells and neutrophils to draining lymph nodes, as well as in their integrin-mediated adhesion. Negatively regulates IL-6 responses through direct interaction with SOCS3 thereby preventing constitutive IL-6 signaling. Alternatively, inhibition of IL-6 signaling can also occur via interaction and stabilization of DECTIN1/CLEC7A at the cell membrane to inhibit its ability to promote the production of IL-6. In Mus musculus (Mouse), this protein is Leukocyte antigen CD37 (Cd37).